A 74-amino-acid polypeptide reads, in one-letter code: UPF0741 protein BcerKBAB4_5177 (74 aa).

This sequence belongs to the UPF0741 family.

The polypeptide is UPF0741 protein BcerKBAB4_5177 (Bacillus mycoides (strain KBAB4) (Bacillus weihenstephanensis)).